Reading from the N-terminus, the 91-residue chain is Small ribosomal subunit protein uS19 (91 aa).

It belongs to the universal ribosomal protein uS19 family.

Functionally, protein S19 forms a complex with S13 that binds strongly to the 16S ribosomal RNA. This chain is Small ribosomal subunit protein uS19, found in Methylobacillus flagellatus (strain ATCC 51484 / DSM 6875 / VKM B-1610 / KT).